The following is a 46-amino-acid chain: Large ribosomal subunit protein bL36 (46 aa).

This sequence belongs to the bacterial ribosomal protein bL36 family.

The polypeptide is Large ribosomal subunit protein bL36 (Serratia proteamaculans (strain 568)).